A 312-amino-acid polypeptide reads, in one-letter code: Putative S-adenosyl-L-methionine-dependent methyltransferase Mjls_0078 (312 aa).

S-adenosyl-L-methionine contacts are provided by residues Asp-134 and 163–164 (DL).

The protein belongs to the UPF0677 family.

Its function is as follows. Exhibits S-adenosyl-L-methionine-dependent methyltransferase activity. The polypeptide is Putative S-adenosyl-L-methionine-dependent methyltransferase Mjls_0078 (Mycobacterium sp. (strain JLS)).